The chain runs to 699 residues: eEF1A lysine and N-terminal methyltransferase (699 aa).

The residue at position 1 (methionine 1) is an N-acetylmethionine. Residue serine 267 is modified to Phosphoserine. Residues 433–459 (VSHKAQKKRKKDRKKQRPADAEDLPAA) form a disordered region. Residues 436 to 448 (KAQKKRKKDRKKQ) are compositionally biased toward basic residues.

Belongs to the methyltransferase superfamily. Forms a tripartite complex containing GAB1, METTL13 and SPRY2. Within the complex interacts with GAB1 and SPRY2.

Its subcellular location is the cytoplasm. It is found in the nucleus. It localises to the mitochondrion. The enzyme catalyses L-lysyl-[protein] + S-adenosyl-L-methionine = N(6)-methyl-L-lysyl-[protein] + S-adenosyl-L-homocysteine + H(+). It carries out the reaction N(6)-methyl-L-lysyl-[protein] + S-adenosyl-L-methionine = N(6),N(6)-dimethyl-L-lysyl-[protein] + S-adenosyl-L-homocysteine + H(+). The catalysed reaction is N-terminal glycyl-L-lysyl-L-glutamyl-[protein] + 3 S-adenosyl-L-methionine = N-terminal N,N,N-trimethyl-glycyl-L-lysyl-L-glutamyl-[protein] + 3 S-adenosyl-L-homocysteine + 3 H(+). Its activity is regulated as follows. Protein N-terminal methyltransferase activity is inhibited by GTP and GDP. Functionally, dual methyltransferase that catalyzes methylation of elongation factor 1-alpha (EEF1A1 and EEF1A2) at two different positions, and is therefore involved in the regulation of mRNA translation. Via its C-terminus, methylates EEF1A1 and EEF1A2 at the N-terminal residue 'Gly-2'. Via its N-terminus dimethylates EEF1A1 and EEF1A2 at residue 'Lys-55'. Has no activity towards core histones H2A, H2B, H3 and H4. This is eEF1A lysine and N-terminal methyltransferase from Homo sapiens (Human).